The following is a 259-amino-acid chain: 3-oxo-5-alpha-steroid 4-dehydrogenase 1 (259 aa).

A run of 5 helical transmembrane segments spans residues 12–29, 86–106, 111–131, 151–171, and 209–229; these read LLAALAYLQCAVGCAVFA, ILLAMFLVHYGHRCLIYPFLM, PMPLLACTMAIMFCTCNGYLQ, FLIGFGLWLTGMLINIHSDHI, and YALASWSVQGAAFAFFTFCFL.

It belongs to the steroid 5-alpha reductase family. Liver and prostate (at a low level).

The protein resides in the microsome membrane. The protein localises to the endoplasmic reticulum membrane. The catalysed reaction is a 3-oxo-5alpha-steroid + NADP(+) = a 3-oxo-Delta(4)-steroid + NADPH + H(+). The enzyme catalyses androst-4-ene-3,17-dione + NADPH + H(+) = 5alpha-androstan-3,17-dione + NADP(+). It carries out the reaction 5alpha-pregnane-3,20-dione + NADP(+) = progesterone + NADPH + H(+). It catalyses the reaction 17beta-hydroxy-5alpha-androstan-3-one + NADP(+) = testosterone + NADPH + H(+). Its function is as follows. Converts testosterone into 5-alpha-dihydrotestosterone and progesterone or corticosterone into their corresponding 5-alpha-3-oxosteroids. It plays a central role in sexual differentiation and androgen physiology. The sequence is that of 3-oxo-5-alpha-steroid 4-dehydrogenase 1 from Homo sapiens (Human).